Reading from the N-terminus, the 962-residue chain is Integrator complex subunit 7 (962 aa).

2 positions are modified to phosphoserine: Ser-338 and Ser-809.

This sequence belongs to the Integrator subunit 7 family. As to quaternary structure, component of the Integrator complex, composed of core subunits INTS1, INTS2, INTS3, INTS4, INTS5, INTS6, INTS7, INTS8, INTS9/RC74, INTS10, INTS11/CPSF3L, INTS12, INTS13, INTS14 and INTS15. The core complex associates with protein phosphatase 2A subunits PPP2CA and PPP2R1A, to form the Integrator-PP2A (INTAC) complex. Interacts with NABP2.

The protein localises to the nucleus. It localises to the chromosome. Its subcellular location is the cytoplasm. Component of the integrator complex, a multiprotein complex that terminates RNA polymerase II (Pol II) transcription in the promoter-proximal region of genes. The integrator complex provides a quality checkpoint during transcription elongation by driving premature transcription termination of transcripts that are unfavorably configured for transcriptional elongation: the complex terminates transcription by (1) catalyzing dephosphorylation of the C-terminal domain (CTD) of Pol II subunit POLR2A/RPB1 and SUPT5H/SPT5, (2) degrading the exiting nascent RNA transcript via endonuclease activity and (3) promoting the release of Pol II from bound DNA. The integrator complex is also involved in terminating the synthesis of non-coding Pol II transcripts, such as enhancer RNAs (eRNAs), small nuclear RNAs (snRNAs), telomerase RNAs and long non-coding RNAs (lncRNAs). May be not involved in the recruitment of cytoplasmic dynein to the nuclear envelope by different components of the INT complex. Plays a role in DNA damage response (DDR) signaling during the S phase. In Bos taurus (Bovine), this protein is Integrator complex subunit 7 (INTS7).